Consider the following 365-residue polypeptide: DNA replication and repair protein RecF (365 aa).

30–37 (GENGQGKT) contributes to the ATP binding site.

Belongs to the RecF family.

The protein resides in the cytoplasm. Functionally, the RecF protein is involved in DNA metabolism; it is required for DNA replication and normal SOS inducibility. RecF binds preferentially to single-stranded, linear DNA. It also seems to bind ATP. The chain is DNA replication and repair protein RecF from Desulfitobacterium hafniense (strain DSM 10664 / DCB-2).